Here is a 179-residue protein sequence, read N- to C-terminus: Large ribosomal subunit protein uL5 (179 aa).

Belongs to the universal ribosomal protein uL5 family. As to quaternary structure, part of the 50S ribosomal subunit; part of the 5S rRNA/L5/L18/L25 subcomplex. Contacts the 5S rRNA and the P site tRNA. Forms a bridge to the 30S subunit in the 70S ribosome.

In terms of biological role, this is one of the proteins that bind and probably mediate the attachment of the 5S RNA into the large ribosomal subunit, where it forms part of the central protuberance. In the 70S ribosome it contacts protein S13 of the 30S subunit (bridge B1b), connecting the 2 subunits; this bridge is implicated in subunit movement. Contacts the P site tRNA; the 5S rRNA and some of its associated proteins might help stabilize positioning of ribosome-bound tRNAs. This chain is Large ribosomal subunit protein uL5, found in Ruthia magnifica subsp. Calyptogena magnifica.